Reading from the N-terminus, the 425-residue chain is Serine--tRNA ligase (425 aa).

Residue T230–E232 coordinates L-serine. Residue R261–E263 participates in ATP binding. E284 provides a ligand contact to L-serine. E348 to S351 is an ATP binding site. L-serine is bound at residue S384.

Belongs to the class-II aminoacyl-tRNA synthetase family. Type-1 seryl-tRNA synthetase subfamily. Homodimer. The tRNA molecule binds across the dimer.

The protein localises to the cytoplasm. It catalyses the reaction tRNA(Ser) + L-serine + ATP = L-seryl-tRNA(Ser) + AMP + diphosphate + H(+). The catalysed reaction is tRNA(Sec) + L-serine + ATP = L-seryl-tRNA(Sec) + AMP + diphosphate + H(+). It functions in the pathway aminoacyl-tRNA biosynthesis; selenocysteinyl-tRNA(Sec) biosynthesis; L-seryl-tRNA(Sec) from L-serine and tRNA(Sec): step 1/1. Catalyzes the attachment of serine to tRNA(Ser). Is also able to aminoacylate tRNA(Sec) with serine, to form the misacylated tRNA L-seryl-tRNA(Sec), which will be further converted into selenocysteinyl-tRNA(Sec). This is Serine--tRNA ligase from Streptococcus equi subsp. equi (strain 4047).